The following is a 353-amino-acid chain: uncharacterized protein (353 aa).

An N-terminal signal peptide occupies residues 1 to 24; that stretch reads MRVVKRIAVACYLGITIFSGIAFG.

This sequence belongs to the chlamydial CPn_1058/CT_355/TC_0634 family.

This is an uncharacterized protein from Chlamydia muridarum (strain MoPn / Nigg).